The chain runs to 230 residues: Orotidine 5'-phosphate decarboxylase (230 aa).

Substrate-binding positions include aspartate 12, lysine 34, aspartate 61–threonine 70, threonine 116, arginine 177, glutamine 186, and arginine 207. The active-site Proton donor is the lysine 63.

It belongs to the OMP decarboxylase family. Type 1 subfamily. In terms of assembly, homodimer.

It carries out the reaction orotidine 5'-phosphate + H(+) = UMP + CO2. It functions in the pathway pyrimidine metabolism; UMP biosynthesis via de novo pathway; UMP from orotate: step 2/2. Its function is as follows. Catalyzes the decarboxylation of orotidine 5'-monophosphate (OMP) to uridine 5'-monophosphate (UMP). The protein is Orotidine 5'-phosphate decarboxylase of Rhizobium rhizogenes (strain K84 / ATCC BAA-868) (Agrobacterium radiobacter).